Consider the following 175-residue polypeptide: Large ribosomal subunit protein uL18 (175 aa).

This sequence belongs to the universal ribosomal protein uL18 family. Part of the 50S ribosomal subunit. Contacts the 5S and 23S rRNAs.

This is one of the proteins that bind and probably mediate the attachment of the 5S RNA into the large ribosomal subunit, where it forms part of the central protuberance. The chain is Large ribosomal subunit protein uL18 from Methanoculleus marisnigri (strain ATCC 35101 / DSM 1498 / JR1).